Consider the following 503-residue polypeptide: MEAATEWLLENTPITKSECTTIRESVVDGDTGGYGVFVNFTKLRTLKGEKDSKFELLRIPRSATISMTSIRDILAKSTSENAVTASIKGHLTAFLSDENHHAFINETNLIVIYLVLKAILSDNKTYKLTGFASFYLNEVLLKTFVPLPCNTFQEDADKWNQYYKEYLNFPQQLFIEIINRFISARFLGMNYEKLISTVYCSVISRILEIPESSGEDTDDFFVSPTLVPLLDFVNHDNDHRNAHFDIDLRTNDIVLYLELDDIDSTVEEAQVFISYAPVEELVHFEQIYGFLPKSNNVQVWCYRFDEDFLSTYHYNGINVSHFYKCMRVRPSFQILILPSEVLINDCIVEFGELLILFSQHLQDPKKISFQLSETNDSYCSILKDKCGTETTKLLDKEECLEEFFGEHDEIENYEKTLKEFKSFLSKYITFRREKISSINLLSQNSSFTAFWQKEINLLDSLKGQFESKKEVMWYEKYGNDEKIKIPTVPFPPPSWIDYENMRV.

One can recognise an SET domain in the interval 52–276; the sequence is SKFELLRIPR…EEAQVFISYA (225 aa). The interval 190 to 291 is SET-like; sequence NYEKLISTVY…VHFEQIYGFL (102 aa).

The protein belongs to the class V-like SAM-binding methyltransferase superfamily.

Its subcellular location is the cytoplasm. The protein resides in the cytosol. It catalyses the reaction L-lysyl-[cytochrome c] + S-adenosyl-L-methionine = N(6)-methyl-L-lysyl-[cytochrome c] + S-adenosyl-L-homocysteine + H(+). Its function is as follows. Methyltransferase which mediates trimethylation of cytochrome c (CYC1). The sequence is that of Cytochrome c lysine N-methyltransferase 1 (CTM1) from Kluyveromyces lactis (strain ATCC 8585 / CBS 2359 / DSM 70799 / NBRC 1267 / NRRL Y-1140 / WM37) (Yeast).